The following is a 490-amino-acid chain: Probable cytosol aminopeptidase (490 aa).

Mn(2+)-binding residues include K256 and D261. The active site involves K268. D280, D340, and E342 together coordinate Mn(2+). The active site involves R344.

Belongs to the peptidase M17 family. The cofactor is Mn(2+).

It is found in the cytoplasm. It carries out the reaction Release of an N-terminal amino acid, Xaa-|-Yaa-, in which Xaa is preferably Leu, but may be other amino acids including Pro although not Arg or Lys, and Yaa may be Pro. Amino acid amides and methyl esters are also readily hydrolyzed, but rates on arylamides are exceedingly low.. It catalyses the reaction Release of an N-terminal amino acid, preferentially leucine, but not glutamic or aspartic acids.. Presumably involved in the processing and regular turnover of intracellular proteins. Catalyzes the removal of unsubstituted N-terminal amino acids from various peptides. The polypeptide is Probable cytosol aminopeptidase (Synechococcus sp. (strain CC9902)).